The chain runs to 946 residues: Inter-alpha-trypsin inhibitor heavy chain H2 (946 aa).

Positions M1–A18 are cleaved as a signal peptide. Residues F19–R54 constitute a propeptide that is removed on maturation. In terms of domain architecture, VIT spans L56–E185. Residue S60 is modified to Phosphoserine. N-linked (GlcNAc...) asparagine glycans are attached at residues N118 and N263. 4-carboxyglutamate is present on residues E282 and E283. The VWFA domain maps to P308–E468. A glycan (N-linked (GlcNAc...) asparagine) is linked at N445. Position 466 is a phosphoserine (S466). An N-linked (GlcNAc...) asparagine glycan is attached at N578. Aspartate 1-(chondroitin 4-sulfate)-ester is present on D702. Positions P703–P946 are excised as a propeptide. S886 carries the phosphoserine modification.

Belongs to the ITIH family. I-alpha-I plasma protease inhibitors are assembled from one or two heavy chains (HC) and one light chain, bikunin. Inter-alpha-inhibitor (I-alpha-I) is composed of ITIH1/HC1, ITIH2/HC2 and bikunin. Post-translationally, heavy chains are linked to bikunin via chondroitin 4-sulfate esterified to the alpha-carboxyl of the C-terminal aspartate after propeptide cleavage. In terms of processing, phosphorylated by FAM20C in the extracellular medium.

It is found in the secreted. Its function is as follows. May act as a carrier of hyaluronan in serum or as a binding protein between hyaluronan and other matrix protein, including those on cell surfaces in tissues to regulate the localization, synthesis and degradation of hyaluronan which are essential to cells undergoing biological processes. In Mesocricetus auratus (Golden hamster), this protein is Inter-alpha-trypsin inhibitor heavy chain H2 (ITIH2).